A 423-amino-acid chain; its full sequence is MKAELIAVGTEILTGQIVNTNAQFLSEKMAELGIDVYFQTAVGDNEERLLSVITTASQRSDLVILCGGLGPTKDDLTKQTLAKYLRKDLVYDEQACQKLDDFFAKRKPSSRTPNNERQAQVIEGSIPLPNKTGLAVGGFITVDGISYVVLPGPPSELKSMVNEELVPLLSKQYSTLYSKVLRFFGVGESQLVTVLSDFIENQTDPTIAPYAKTGEVTLRLSTKTENQALADKKLGQLEAQLLSRKTLEGQPLADVFYGYGEDNSLARETFELLVKYDKTITAAESLTAGLFQSTLASFPGASQVFNGGFVAYSMEEKAKMLGLPLEELKSHGVVSAYTAEGMAEQARLLTGADIGVSLTGVAGPDMLEEQPAGTVFIGLATQNKVESIKVLISGQSRLDVRYIATLHAFNMVRKTLLKLENLL.

The protein belongs to the CinA family.

The protein is Putative competence-damage inducible protein of Streptococcus pyogenes serotype M18 (strain MGAS8232).